Reading from the N-terminus, the 51-residue chain is Large ribosomal subunit protein eL39 (51 aa).

It belongs to the eukaryotic ribosomal protein eL39 family.

In Methanococcus aeolicus (strain ATCC BAA-1280 / DSM 17508 / OCM 812 / Nankai-3), this protein is Large ribosomal subunit protein eL39.